Consider the following 260-residue polypeptide: Hemin import ATP-binding protein HmuV (260 aa).

In terms of domain architecture, ABC transporter spans 3–239 (LHAQQISLSI…QRLSEVYGCD (237 aa)). 35-42 (GPNGSGKS) contacts ATP.

It belongs to the ABC transporter superfamily. Heme (hemin) importer (TC 3.A.1.14.5) family. In terms of assembly, the complex is composed of two ATP-binding proteins (HmuV), two transmembrane proteins (HmuU) and a solute-binding protein (HmuT).

It localises to the cell inner membrane. In terms of biological role, part of the ABC transporter complex HmuTUV involved in hemin import. Responsible for energy coupling to the transport system. This is Hemin import ATP-binding protein HmuV from Ruegeria sp. (strain TM1040) (Silicibacter sp.).